We begin with the raw amino-acid sequence, 516 residues long: uncharacterized protein (516 aa).

Helical transmembrane passes span 10 to 27 (IRYPELALFLVIAAGYWI), 32 to 54 (IGAFSLGPVTGALFAGLVVGDFA), 64 to 83 (SFLFLLFLFGVGYSVGPQFV), 95 to 117 (LLAVVVCLTGLAAAIAVGRILGL), and 165 to 187 (AVCYIFGYAGVIMWCTVVAPALL). 2 RCK C-terminal domains span residues 208 to 291 (KPGL…SRAE) and 296 to 376 (RELL…NIGV). The next 4 helical transmembrane spans lie at 386–408 (FVVLGLAIFFGGVVGVLVSFPVG), 412–430 (IALSTSVGTLLAGLLVGHL), 443–465 (GAISLMTSLGLAAFVGLTGIHAG), and 480–502 (LLGGMVVTLLPQIVGFCFGHFVL).

Belongs to the AAE transporter (TC 2.A.81) family.

Its subcellular location is the cell membrane. This is an uncharacterized protein from Bradyrhizobium diazoefficiens (strain JCM 10833 / BCRC 13528 / IAM 13628 / NBRC 14792 / USDA 110).